Consider the following 341-residue polypeptide: Glyceraldehyde-3-phosphate dehydrogenase 1 (341 aa).

NAD(+) is bound by residues 13-14 (RI), D35, and K85. D-glyceraldehyde 3-phosphate is bound by residues 157–159 (SCT), T188, 217–218 (TG), and R240. C158 serves as the catalytic Nucleophile. Residue N322 coordinates NAD(+).

It belongs to the glyceraldehyde-3-phosphate dehydrogenase family. In terms of assembly, homotetramer.

The protein resides in the cytoplasm. It carries out the reaction D-glyceraldehyde 3-phosphate + phosphate + NAD(+) = (2R)-3-phospho-glyceroyl phosphate + NADH + H(+). It functions in the pathway carbohydrate degradation; glycolysis; pyruvate from D-glyceraldehyde 3-phosphate: step 1/5. The protein is Glyceraldehyde-3-phosphate dehydrogenase 1 (gpd-1) of Caenorhabditis elegans.